The sequence spans 391 residues: Stearoyl-[acyl-carrier-protein] 9-desaturase 5, chloroplastic (391 aa).

The tract at residues 1 to 20 (MAFAPSHTASPSYCGVAQGG) is disordered. A chloroplast-targeting transit peptide spans 1–32 (MAFAPSHTASPSYCGVAQGGRRSNGMSPVVAM). Positions 133, 171, 174, 224, 257, and 260 each coordinate Fe cation.

It belongs to the fatty acid desaturase type 2 family. As to quaternary structure, homodimer. Fe(2+) serves as cofactor.

The protein localises to the plastid. Its subcellular location is the chloroplast. The catalysed reaction is octadecanoyl-[ACP] + 2 reduced [2Fe-2S]-[ferredoxin] + O2 + 2 H(+) = (9Z)-octadecenoyl-[ACP] + 2 oxidized [2Fe-2S]-[ferredoxin] + 2 H2O. It functions in the pathway lipid metabolism; fatty acid metabolism. Its function is as follows. Converts stearoyl-ACP to oleoyl-ACP by introduction of a cis double bond between carbons 9 and 10 of the acyl chain. The chain is Stearoyl-[acyl-carrier-protein] 9-desaturase 5, chloroplastic from Oryza sativa subsp. indica (Rice).